The chain runs to 396 residues: Elongation factor Tu (396 aa).

The 197-residue stretch at 10-206 folds into the tr-type G domain; the sequence is KPHVNVGTIG…ALDTYIPTPE (197 aa). The G1 stretch occupies residues 19-26; the sequence is GHVDHGKT. 19–26 contributes to the GTP binding site; that stretch reads GHVDHGKT. Thr-26 contributes to the Mg(2+) binding site. Residues 60 to 64 form a G2 region; that stretch reads GITIN. Residues 81 to 84 form a G3 region; that stretch reads DCPG. GTP-binding positions include 81 to 85 and 136 to 139; these read DCPGH and NKAD. Residues 136-139 are G4; it reads NKAD. Residues 174 to 176 form a G5 region; that stretch reads SAK.

Belongs to the TRAFAC class translation factor GTPase superfamily. Classic translation factor GTPase family. EF-Tu/EF-1A subfamily. As to quaternary structure, monomer.

It is found in the cytoplasm. The catalysed reaction is GTP + H2O = GDP + phosphate + H(+). In terms of biological role, GTP hydrolase that promotes the GTP-dependent binding of aminoacyl-tRNA to the A-site of ribosomes during protein biosynthesis. The sequence is that of Elongation factor Tu from Janthinobacterium sp. (strain Marseille) (Minibacterium massiliensis).